The primary structure comprises 131 residues: Small ribosomal subunit protein uS8 (131 aa).

The protein belongs to the universal ribosomal protein uS8 family. As to quaternary structure, part of the 30S ribosomal subunit. Contacts proteins S5 and S12.

Functionally, one of the primary rRNA binding proteins, it binds directly to 16S rRNA central domain where it helps coordinate assembly of the platform of the 30S subunit. This is Small ribosomal subunit protein uS8 from Polaromonas naphthalenivorans (strain CJ2).